The following is a 153-amino-acid chain: UPF0540 protein At1g62220 (153 aa).

An N-terminal signal peptide occupies residues 1 to 21 (MNATKFVVLLVISVLCAIVTA). Disordered stretches follow at residues 63 to 82 (SSAT…YENG) and 122 to 153 (ARAN…GKKD). Low complexity predominate over residues 122–132 (ARANGKVASAS). The segment covering 141–153 (KKGKGKKGKGKKD) has biased composition (basic residues).

This sequence belongs to the UPF0540 family.

The protein is UPF0540 protein At1g62220 of Arabidopsis thaliana (Mouse-ear cress).